The primary structure comprises 232 residues: MDKAQQDALKKAAGIEAAKLIQNGMIAGLGTGSTVRFLVDELGRRVKEEGLEFTGVTTSRRTQEQAEGYGIKIVNIDDVDHIDVTIDGADEVDKNFNGIKGGGAALLWEKIVATNSNKIVWIVDESKVVDTIGKFPLPVEVIPFGAGQVVKKFEAKGYKPVLRLDANGEPVRTDENNYVVDLHLERIDHPQELAQDLITTVGVVEHGLFLNMVDQVIVGDPNGPRVMDNPNK.

Substrate-binding positions include 31–34 (TGST), 87–90 (DGAD), and 100–103 (KGGG). Catalysis depends on Glu109, which acts as the Proton acceptor. Lys127 lines the substrate pocket.

Belongs to the ribose 5-phosphate isomerase family. In terms of assembly, homodimer.

It catalyses the reaction aldehydo-D-ribose 5-phosphate = D-ribulose 5-phosphate. Its pathway is carbohydrate degradation; pentose phosphate pathway; D-ribose 5-phosphate from D-ribulose 5-phosphate (non-oxidative stage): step 1/1. Its function is as follows. Catalyzes the reversible conversion of ribose-5-phosphate to ribulose 5-phosphate. The protein is Ribose-5-phosphate isomerase A of Bifidobacterium adolescentis (strain ATCC 15703 / DSM 20083 / NCTC 11814 / E194a).